A 341-amino-acid chain; its full sequence is Glycerol-3-phosphate dehydrogenase [NAD(P)+] (341 aa).

The NADPH site is built by serine 11, tryptophan 12, arginine 32, and lysine 106. 3 residues coordinate sn-glycerol 3-phosphate: lysine 106, glycine 137, and threonine 139. Alanine 141 provides a ligand contact to NADPH. Residues lysine 192, aspartate 245, serine 255, arginine 256, and asparagine 257 each contribute to the sn-glycerol 3-phosphate site. Lysine 192 (proton acceptor) is an active-site residue. Arginine 256 contributes to the NADPH binding site. Positions 280 and 282 each coordinate NADPH.

This sequence belongs to the NAD-dependent glycerol-3-phosphate dehydrogenase family.

It is found in the cytoplasm. It catalyses the reaction sn-glycerol 3-phosphate + NAD(+) = dihydroxyacetone phosphate + NADH + H(+). The catalysed reaction is sn-glycerol 3-phosphate + NADP(+) = dihydroxyacetone phosphate + NADPH + H(+). It participates in membrane lipid metabolism; glycerophospholipid metabolism. Catalyzes the reduction of the glycolytic intermediate dihydroxyacetone phosphate (DHAP) to sn-glycerol 3-phosphate (G3P), the key precursor for phospholipid synthesis. The sequence is that of Glycerol-3-phosphate dehydrogenase [NAD(P)+] from Exiguobacterium sp. (strain ATCC BAA-1283 / AT1b).